The following is a 400-amino-acid chain: Chaperone protein DnaJ (400 aa).

The region spanning 4–69 (DYYETLGVTR…DKRRRYDQFG (66 aa)) is the J domain. The CR-type zinc-finger motif lies at 156 to 237 (GVEKTLKVKR…CYGEGIKLGE (82 aa)). Zn(2+) is bound by residues Cys169, Cys172, Cys185, Cys188, Cys211, Cys214, Cys225, and Cys228. CXXCXGXG motif repeat units follow at residues 169 to 176 (CEVCNGTG), 185 to 192 (CQTCHGSG), 211 to 218 (CPTCGGEG), and 225 to 232 (CTACYGEG).

It belongs to the DnaJ family. Homodimer. Requires Zn(2+) as cofactor.

The protein localises to the cytoplasm. Participates actively in the response to hyperosmotic and heat shock by preventing the aggregation of stress-denatured proteins and by disaggregating proteins, also in an autonomous, DnaK-independent fashion. Unfolded proteins bind initially to DnaJ; upon interaction with the DnaJ-bound protein, DnaK hydrolyzes its bound ATP, resulting in the formation of a stable complex. GrpE releases ADP from DnaK; ATP binding to DnaK triggers the release of the substrate protein, thus completing the reaction cycle. Several rounds of ATP-dependent interactions between DnaJ, DnaK and GrpE are required for fully efficient folding. Also involved, together with DnaK and GrpE, in the DNA replication of plasmids through activation of initiation proteins. This Chlorobium chlorochromatii (strain CaD3) protein is Chaperone protein DnaJ.